The following is a 713-amino-acid chain: Polyribonucleotide nucleotidyltransferase (713 aa).

2 residues coordinate Mg(2+): Asp-494 and Asp-500. A KH domain is found at 561 to 623 (PSFSTMTIPK…EAVQSAEKRV (63 aa)). An S1 motif domain is found at 633–702 (GDVYQGTVKS…KSGKYKLSRK (70 aa)).

This sequence belongs to the polyribonucleotide nucleotidyltransferase family. Requires Mg(2+) as cofactor.

It is found in the cytoplasm. It carries out the reaction RNA(n+1) + phosphate = RNA(n) + a ribonucleoside 5'-diphosphate. Its function is as follows. Involved in mRNA degradation. Catalyzes the phosphorolysis of single-stranded polyribonucleotides processively in the 3'- to 5'-direction. This chain is Polyribonucleotide nucleotidyltransferase, found in Amoebophilus asiaticus (strain 5a2).